Consider the following 241-residue polypeptide: DNA repair protein RecO (241 aa).

The protein belongs to the RecO family.

Its function is as follows. Involved in DNA repair and RecF pathway recombination. In Phocaeicola vulgatus (strain ATCC 8482 / DSM 1447 / JCM 5826 / CCUG 4940 / NBRC 14291 / NCTC 11154) (Bacteroides vulgatus), this protein is DNA repair protein RecO.